The primary structure comprises 67 residues: Large ribosomal subunit protein uL29 (67 aa).

The protein belongs to the universal ribosomal protein uL29 family.

The polypeptide is Large ribosomal subunit protein uL29 (Staphylothermus marinus (strain ATCC 43588 / DSM 3639 / JCM 9404 / F1)).